The sequence spans 421 residues: CinA-like protein (421 aa).

The protein belongs to the CinA family.

In Myxococcus xanthus (strain DK1622), this protein is CinA-like protein.